A 127-amino-acid polypeptide reads, in one-letter code: Aspartate 1-decarboxylase (127 aa).

The active-site Schiff-base intermediate with substrate; via pyruvic acid is Ser25. Residue Ser25 is modified to Pyruvic acid (Ser). Residue Thr57 participates in substrate binding. The active-site Proton donor is Tyr58. Residue Gly73 to Ala75 participates in substrate binding.

This sequence belongs to the PanD family. In terms of assembly, heterooctamer of four alpha and four beta subunits. The cofactor is pyruvate. Is synthesized initially as an inactive proenzyme, which is activated by self-cleavage at a specific serine bond to produce a beta-subunit with a hydroxyl group at its C-terminus and an alpha-subunit with a pyruvoyl group at its N-terminus.

The protein resides in the cytoplasm. The enzyme catalyses L-aspartate + H(+) = beta-alanine + CO2. Its pathway is cofactor biosynthesis; (R)-pantothenate biosynthesis; beta-alanine from L-aspartate: step 1/1. Functionally, catalyzes the pyruvoyl-dependent decarboxylation of aspartate to produce beta-alanine. The sequence is that of Aspartate 1-decarboxylase from Polaromonas naphthalenivorans (strain CJ2).